We begin with the raw amino-acid sequence, 234 residues long: Sugar fermentation stimulation protein A (234 aa).

Positions 201-220 (LLSEAQNKGVEVLAYKAELS) form a DNA-binding region, H-T-H motif.

Belongs to the SfsA family.

Functionally, binds to DNA non-specifically. Could be a regulatory factor involved in maltose metabolism. The chain is Sugar fermentation stimulation protein A from Salmonella arizonae (strain ATCC BAA-731 / CDC346-86 / RSK2980).